The chain runs to 108 residues: MQRIRKGDKVVVITGKNKGGSGIVLKVLTKQNKAIVEGINKVTVHKKEQVNKRSKQTNPTTKEAPLPLNKLALFDQKAKQQTIGKIKYQIDPKTKQKTRVFKKTNNAI.

It belongs to the universal ribosomal protein uL24 family. Part of the 50S ribosomal subunit.

One of two assembly initiator proteins, it binds directly to the 5'-end of the 23S rRNA, where it nucleates assembly of the 50S subunit. In terms of biological role, one of the proteins that surrounds the polypeptide exit tunnel on the outside of the subunit. The polypeptide is Large ribosomal subunit protein uL24 (Mycoplasma genitalium (strain ATCC 33530 / DSM 19775 / NCTC 10195 / G37) (Mycoplasmoides genitalium)).